We begin with the raw amino-acid sequence, 242 residues long: MADKEALPKLREDFKMQNKSVFILGASGETGKVLLKEILGQNLFSKVTLIGRRKLTFEEEAYKNVNQEVVDFEKLDVYASAFQGHDVGFCCLGTTRSKAGAEGFVRVDRDYVLKSAELAKAGGCKHFNLLSSRGADKSSSFLYLQVKGEVEAKVEELKFDRLSVFRPGVLLCDRQESRPGEWLARKFFGSLPDSWASGYAVPVVTVVRAMLNNLVSPSSGQMELLENKAILHLGKDRDVPKL.

A2 bears the N-acetylalanine mark. The tract at residues 2-25 (ADKEALPKLREDFKMQNKSVFILG) is required for interaction with elongation factor EEF1A1. S27, G28, E29, T30, R52, R53, L92, G93, Y143, K147, L170, and R178 together coordinate NADPH. The active-site Proton acceptor is the Y143. Residue K147 is part of the active site.

As to quaternary structure, monomer. Forms homodimers during oxidative stress. Interacts (via N-terminus) with elongation factor EEF1A1 (via middle-region); the interaction is direct and competes with EEF1A1 binding to guanyl-nucleotide exchange factor EEF1B2, thereby inhibiting GDP for GTP exchange and reactivation of EEF1A1. Interacts with nuclear transport receptors XPO4, IPO5/RANBP5, IPO7, IPO9 and KPNB1 as well as GCN1L1/GCN1 and LRPPRC probably through their HEAT repeats. Binds NCOA5/CIA.

Its subcellular location is the cytoplasm. In terms of biological role, represses translation by preventing reactivation of elongation factor eEF1A. May also inhibit nuclear import by competing with nuclear import substrates for binding to a subset of nuclear transport receptors. Has additionally been proposed to act as a redox sensor involved in cellular oxidative stress surveillance. The polypeptide is Protein HTATIP2 (Mus musculus (Mouse)).